A 479-amino-acid chain; its full sequence is Cardiolipin synthase A (479 aa).

Helical transmembrane passes span 8-28 and 38-58; these read FFGYVLGFIHLLGTGAAIHAL and IAWAMPLLFIPYFTLLPYLVF. 2 PLD phosphodiesterase domains span residues 218–245 and 392–419; these read INFRNHRKIVVVDGLKGYIGGHNVGDEY and EPGFLHQKVVLVDNEITAIGSANLDNRS. Active-site residues include His-223, Lys-225, Asp-230, His-397, Lys-399, and Asp-404.

The protein belongs to the phospholipase D family. Cardiolipin synthase subfamily. ClsA sub-subfamily.

It is found in the cell inner membrane. It carries out the reaction 2 a 1,2-diacyl-sn-glycero-3-phospho-(1'-sn-glycerol) = a cardiolipin + glycerol. Functionally, catalyzes the reversible phosphatidyl group transfer from one phosphatidylglycerol molecule to another to form cardiolipin (CL) (diphosphatidylglycerol) and glycerol. The sequence is that of Cardiolipin synthase A from Pseudomonas syringae pv. syringae (strain B728a).